We begin with the raw amino-acid sequence, 199 residues long: Protein PPP1R35 homolog (199 aa).

Basic residues predominate over residues 1–11 (MPHKRRNRVHA). Disordered regions lie at residues 1 to 23 (MPHKRRNRVHANQRNFTARRVSV) and 36 to 60 (ESCNGSHADNSSPDSPKAKEGAMTN). The span at 38–49 (CNGSHADNSSPD) shows a compositional bias: polar residues.

It belongs to the PPP1R35 family. Interacts with Ana3; this complex is recruited to daughter centrioles before their conversion to centrosomes.

The protein localises to the cytoplasm. It localises to the cytoskeleton. It is found in the microtubule organizing center. Its subcellular location is the centrosome. The protein resides in the centriole. Its function is as follows. Participates in the later stages of centriole assembly through the interaction with Ana3 leading to the centriole to centrosome conversion in somatic cells. The protein is Protein PPP1R35 homolog of Drosophila melanogaster (Fruit fly).